An 878-amino-acid chain; its full sequence is Staphylococcal nuclease domain-containing protein 1 (878 aa).

TNase-like domains are found at residues 3–142 (QYVS…IWGP) and 167–312 (KKLN…IWKN). Position 316 is a phosphoserine (S316). 2 consecutive TNase-like domains span residues 326-464 (KDYS…MWSG) and 493-626 (RKLS…MWHD). Positions 695–755 (KINVGMNVAA…SSLPDTYTKL (61 aa)) constitute a Tudor domain.

It is found in the cytoplasm. The protein localises to the cytosol. In Schizosaccharomyces pombe (strain 972 / ATCC 24843) (Fission yeast), this protein is Staphylococcal nuclease domain-containing protein 1.